We begin with the raw amino-acid sequence, 118 residues long: NADH-ubiquinone oxidoreductase chain 3 (118 aa).

3 consecutive transmembrane segments (helical) span residues Ile7 to Leu27, Leu62 to Val82, and Ile87 to Leu107.

Belongs to the complex I subunit 3 family.

It is found in the mitochondrion membrane. The catalysed reaction is a ubiquinone + NADH + 5 H(+)(in) = a ubiquinol + NAD(+) + 4 H(+)(out). Its function is as follows. Core subunit of the mitochondrial membrane respiratory chain NADH dehydrogenase (Complex I) that is believed to belong to the minimal assembly required for catalysis. Complex I functions in the transfer of electrons from NADH to the respiratory chain. The immediate electron acceptor for the enzyme is believed to be ubiquinone. This chain is NADH-ubiquinone oxidoreductase chain 3 (ND3), found in Oenothera berteroana (Bertero's evening primrose).